The following is a 192-amino-acid chain: Nucleoside triphosphate pyrophosphatase (192 aa).

The active-site Proton acceptor is the Asp73.

The protein belongs to the Maf family. The cofactor is a divalent metal cation.

The protein resides in the cytoplasm. The catalysed reaction is a ribonucleoside 5'-triphosphate + H2O = a ribonucleoside 5'-phosphate + diphosphate + H(+). It catalyses the reaction a 2'-deoxyribonucleoside 5'-triphosphate + H2O = a 2'-deoxyribonucleoside 5'-phosphate + diphosphate + H(+). Nucleoside triphosphate pyrophosphatase. May have a dual role in cell division arrest and in preventing the incorporation of modified nucleotides into cellular nucleic acids. The protein is Nucleoside triphosphate pyrophosphatase of Ehrlichia canis (strain Jake).